The primary structure comprises 94 residues: Aspartyl/glutamyl-tRNA(Asn/Gln) amidotransferase subunit C (94 aa).

This sequence belongs to the GatC family. As to quaternary structure, heterotrimer of A, B and C subunits.

The catalysed reaction is L-glutamyl-tRNA(Gln) + L-glutamine + ATP + H2O = L-glutaminyl-tRNA(Gln) + L-glutamate + ADP + phosphate + H(+). The enzyme catalyses L-aspartyl-tRNA(Asn) + L-glutamine + ATP + H2O = L-asparaginyl-tRNA(Asn) + L-glutamate + ADP + phosphate + 2 H(+). Allows the formation of correctly charged Asn-tRNA(Asn) or Gln-tRNA(Gln) through the transamidation of misacylated Asp-tRNA(Asn) or Glu-tRNA(Gln) in organisms which lack either or both of asparaginyl-tRNA or glutaminyl-tRNA synthetases. The reaction takes place in the presence of glutamine and ATP through an activated phospho-Asp-tRNA(Asn) or phospho-Glu-tRNA(Gln). This Solidesulfovibrio magneticus (strain ATCC 700980 / DSM 13731 / RS-1) (Desulfovibrio magneticus) protein is Aspartyl/glutamyl-tRNA(Asn/Gln) amidotransferase subunit C.